A 112-amino-acid polypeptide reads, in one-letter code: Protein Tat (112 aa).

Residues 1-24 are interaction with human CREBBP; the sequence is MDPVDPEMPPWHHPGSKPQTPCNN. Residues 1-48 are transactivation; the sequence is MDPVDPEMPPWHHPGSKPQTPCNNCYCKRCCYHCYVCFTKKGLGISHG. Positions 22, 25, and 27 each coordinate Zn(2+). Residues 22-37 form a cysteine-rich region; the sequence is CNNCYCKRCCYHCYVC. Lys-28 bears the N6-acetyllysine; by host PCAF mark. Zn(2+)-binding residues include Cys-30, His-33, Cys-34, and Cys-37. The segment at 38–48 is core; sequence FTKKGLGISHG. Residues 45-112 form a disordered region; it reads ISHGRKKRRR…CNSCTRISGQ (68 aa). Positions 49 to 56 match the Nuclear localization signal, RNA-binding (TAR), and protein transduction motif; it reads RKKRRRPA. The interaction with the host capping enzyme RNGTT stretch occupies residues 49-82; the sequence is RKKRRRPAAAASYPDNKDPVPEQHTGRKQKRQEE. 2 positions are modified to N6-acetyllysine; by host EP300 and GCN5L2: Lys-50 and Lys-51. An asymmetric dimethylarginine; by host PRMT6 mark is found at Arg-52 and Arg-53. Over residues 63–91 the composition is skewed to basic and acidic residues; that stretch reads DNKDPVPEQHTGRKQKRQEEQEKKVEKET. Positions 93 to 112 are enriched in polar residues; sequence PSGQPCHQDSCNSCTRISGQ.

This sequence belongs to the lentiviruses Tat family. In terms of assembly, interacts with host CCNT1. Associates with the P-TEFb complex composed at least of Tat, P-TEFb (CDK9 and CCNT1), TAR RNA, RNA Pol II. Recruits the HATs CREBBP, TAF1/TFIID, EP300, PCAF and GCN5L2. Interacts with host KAT5/Tip60; this interaction targets the latter to degradation. Interacts with the host deacetylase SIRT1. Interacts with host capping enzyme RNGTT; this interaction stimulates RNGTT. Binds to host KDR, and to the host integrins ITGAV/ITGB3 and ITGA5/ITGB1. Interacts with host KPNB1/importin beta-1 without previous binding to KPNA1/importin alpha-1. Interacts with EIF2AK2. Interacts with host nucleosome assembly protein NAP1L1; this interaction may be required for the transport of Tat within the nucleus, since the two proteins interact at the nuclear rim. Interacts with host C1QBP/SF2P32; this interaction involves lysine-acetylated Tat. Interacts with the host chemokine receptors CCR2, CCR3 and CXCR4. Interacts with host DPP4/CD26; this interaction may trigger an anti-proliferative effect. Interacts with host LDLR. Interacts with the host extracellular matrix metalloproteinase MMP1. Interacts with host PRMT6; this interaction mediates Tat's methylation. Interacts with, and is ubiquitinated by MDM2/Hdm2. Interacts with host PSMC3 and HTATIP2. Interacts with STAB1; this interaction may overcome SATB1-mediated repression of IL2 and IL2RA (interleukin) in T cells by binding to the same domain than HDAC1. Interacts (when acetylated) with human CDK13, thereby increasing HIV-1 mRNA splicing and promoting the production of the doubly spliced HIV-1 protein Nef. Interacts with host TBP; this interaction modulates the activity of transcriptional pre-initiation complex. Interacts with host RELA. Interacts with host PLSCR1; this interaction negatively regulates Tat transactivation activity by altering its subcellular distribution. In terms of processing, asymmetrical arginine methylation by host PRMT6 seems to diminish the transactivation capacity of Tat and affects the interaction with host CCNT1. Post-translationally, acetylation by EP300, CREBBP, GCN5L2/GCN5 and PCAF regulates the transactivation activity of Tat. EP300-mediated acetylation of Lys-50 promotes dissociation of Tat from the TAR RNA through the competitive binding to PCAF's bromodomain. In addition, the non-acetylated Tat's N-terminus can also interact with PCAF. PCAF-mediated acetylation of Lys-28 enhances Tat's binding to CCNT1. Lys-50 is deacetylated by SIRT1. Polyubiquitination by host MDM2 does not target Tat to degradation, but activates its transactivation function and fosters interaction with CCNT1 and TAR RNA. In terms of processing, phosphorylated by EIF2AK2 on serine and threonine residues adjacent to the basic region important for TAR RNA binding and function. Phosphorylation of Tat by EIF2AK2 is dependent on the prior activation of EIF2AK2 by dsRNA.

The protein resides in the host nucleus. It localises to the host nucleolus. The protein localises to the host cytoplasm. Its subcellular location is the secreted. In terms of biological role, transcriptional activator that increases RNA Pol II processivity, thereby increasing the level of full-length viral transcripts. Recognizes a hairpin structure at the 5'-LTR of the nascent viral mRNAs referred to as the transactivation responsive RNA element (TAR) and recruits the cyclin T1-CDK9 complex (P-TEFb complex) that will in turn hyperphosphorylate the RNA polymerase II to allow efficient elongation. The CDK9 component of P-TEFb and other Tat-activated kinases hyperphosphorylate the C-terminus of RNA Pol II that becomes stabilized and much more processive. Other factors such as HTATSF1/Tat-SF1, SUPT5H/SPT5, and HTATIP2 are also important for Tat's function. Besides its effect on RNA Pol II processivity, Tat induces chromatin remodeling of proviral genes by recruiting the histone acetyltransferases (HATs) CREBBP, EP300 and PCAF to the chromatin. This also contributes to the increase in proviral transcription rate, especially when the provirus integrates in transcriptionally silent region of the host genome. To ensure maximal activation of the LTR, Tat mediates nuclear translocation of NF-kappa-B by interacting with host RELA. Through its interaction with host TBP, Tat may also modulate transcription initiation. Tat can reactivate a latently infected cell by penetrating in it and transactivating its LTR promoter. In the cytoplasm, Tat is thought to act as a translational activator of HIV-1 mRNAs. Functionally, extracellular circulating Tat can be endocytosed by surrounding uninfected cells via the binding to several surface receptors such as CD26, CXCR4, heparan sulfate proteoglycans (HSPG) or LDLR. Neurons are rarely infected, but they internalize Tat via their LDLR. Through its interaction with nuclear HATs, Tat is potentially able to control the acetylation-dependent cellular gene expression. Modulates the expression of many cellular genes involved in cell survival, proliferation or in coding for cytokines or cytokine receptors. Tat plays a role in T-cell and neurons apoptosis. Tat induced neurotoxicity and apoptosis probably contribute to neuroAIDS. Circulating Tat also acts as a chemokine-like and/or growth factor-like molecule that binds to specific receptors on the surface of the cells, affecting many cellular pathways. In the vascular system, Tat binds to ITGAV/ITGB3 and ITGA5/ITGB1 integrins dimers at the surface of endothelial cells and competes with bFGF for heparin-binding sites, leading to an excess of soluble bFGF. The polypeptide is Protein Tat (Homo sapiens (Human)).